Here is a 1059-residue protein sequence, read N- to C-terminus: Pleckstrin homology domain-containing family M member 1 (1059 aa).

The region spanning 40–182 (TSEDGDANTM…LSFELSYKSA (143 aa)) is the RUN domain. Ser-218 is modified (phosphoserine). Disordered stretches follow at residues 218 to 244 (SLDS…RRDR), 272 to 334 (LQEN…TPMF), and 354 to 411 (SEEP…DQGS). Polar residues-rich tracts occupy residues 313 to 334 (SKAQ…TPMF) and 392 to 401 (GSTSDQQPSS). Phosphoserine occurs at positions 430, 433, and 488. Residues 536 to 627 (GLMKLGTVAR…WLDRVREALQ (92 aa)) enclose the PH 1 domain. An LIR motif is present at residues 634 to 640 (EEEWVNI). Residues 657-1059 (LPPYSALLPE…RKYQEQNTVS (403 aa)) form an interaction with RAB7A region. Positions 686–780 (DAIKESLLYL…WRDLVRKVLA (95 aa)) constitute a PH 2 domain. A Phorbol-ester/DAG-type zinc finger spans residues 989 to 1043 (QHVYHCDLCTQRGFICQICHHQDIIFPFEFDTTVRCAECRTVFHQSCQAVVRKGC).

As to quaternary structure, interacts (via N- and C-terminus) with RAB7A (GTP-bound form). Simultaneously interacts with RAB7A and ARL8B; bringing about clustering and fusion of late endosomes and lysosomes. Interacts (via RUN domain) with ARL8B (GTP-bound form); the interaction is required for PLEKHM1 localization to lysosomes and for ARL8B function in delivery and degradation of endocytic and autophagic cargo in lysosomes. PLEKHM1 and PLEKHM2 compete for interaction with ARL8B. Interacts with ARL8A; the interaction is weaker than with ARL8B. Interacts with VPS41, VPS11, VPS18, VPS33A and VPS39; indicative for an association with the HOPS complex; the interactions with, at least, VPS41, VPS11, VPS18 and VPS33A require ARL8B. Interacts with GABARAP, GABARAPL, GABARAPL2, MAP1LC3A, MAP1LC3B and MAP1LC3C. Interacts with PAFAH1B. Interacts (via N- and C-terminus) with NDEL1. Interacts (via C-terminus) with MAP3K7. Interacts (via N- and C-terminus) with FAM98A. Interacts (via C-terminus) with DEF8; this interaction is weak but increased in a RAB7A-dependent manner. May interact with sialyl-lex-positive protein. In terms of tissue distribution, expressed in testis, skeletal muscle, lung, liver, spleen, brain, heart, kidney and bone. Weakly expressed in monocytes (at protein level).

The protein localises to the autolysosome membrane. The protein resides in the endosome membrane. It is found in the late endosome membrane. Its subcellular location is the lysosome membrane. Acts as a multivalent adapter protein that regulates Rab7-dependent and HOPS complex-dependent fusion events in the endolysosomal system and couples autophagic and the endocytic trafficking pathways. Acts as a dual effector of RAB7A and ARL8B that simultaneously binds these GTPases, bringing about clustering and fusion of late endosomes and lysosomes. Required for late stages of endolysosomal maturation, facilitating both endocytosis-mediated degradation of growth factor receptors and autophagosome clearance. Interaction with Arl8b is a crucial factor in the terminal maturation of autophagosomes and to mediate autophagosome-lysosome fusion. Positively regulates lysosome peripheral distribution and ruffled border formation in osteoclasts. May be involved in negative regulation of endocytic transport from early endosome to late endosome/lysosome implicating its association with Rab7. May have a role in sialyl-lex-mediated transduction of apoptotic signals. Involved in bone resorption. The chain is Pleckstrin homology domain-containing family M member 1 from Rattus norvegicus (Rat).